Consider the following 188-residue polypeptide: Protein Cripto (188 aa).

The first 30 residues, 1 to 30 (MDCRKMARFSYSVIWIMAISKVFELGLVAG), serve as a signal peptide directing secretion. The region spanning 78–107 (LNRTCCLNGGTCMLGSFCACPPSFYGRNCE) is the EGF-like domain. An N-linked (GlcNAc...) asparagine glycan is attached at Asn79. 6 disulfides stabilise this stretch: Cys82/Cys89, Cys83/Cys95, Cys97/Cys106, Cys115/Cys133, Cys128/Cys149, and Cys131/Cys140. Asp150 carries GPI-anchor amidated aspartate lipidation. Residues 151–188 (GLVMDEHLVASRTPELPPSARTTTFMLVGICLSIQSYY) constitute a propeptide, removed in mature form.

This sequence belongs to the EGF-CFC (Cripto-1/FRL1/Cryptic) family. In terms of assembly, interacts with the activin type-1 receptor ACVR1B. The GPI-anchor is attached to the protein in the endoplasmic reticulum and serves to target the protein to the cell surface. There, it is processed by GPI processing phospholipase A2 (TMEM8A), removing an acyl-chain at the sn-2 position of GPI and releasing CRIPTO as a lysophosphatidylinositol-bearing form, which is further cleaved by phospholipase D (GPLD1) into a soluble form. As to expression, preferentially expressed in gastric and colorectal carcinomas than in their normal counterparts. Expressed in breast and lung.

The protein resides in the cell membrane. Its subcellular location is the secreted. Functionally, GPI-anchored cell membrane protein involved in Nodal signaling. Cell-associated CRIPTO acts as a Nodal coreceptor in cis. Shedding of CRIPTO by TMEM8A modulates Nodal signaling by allowing soluble CRIPTO to act as a Nodal coreceptor on other cells. Could play a role in the determination of the epiblastic cells that subsequently give rise to the mesoderm. This Homo sapiens (Human) protein is Protein Cripto.